Reading from the N-terminus, the 355-residue chain is Heavy metal-associated isoprenylated plant protein 7 (355 aa).

Basic and acidic residues predominate over residues 1–58 (MGEEEKKPEAAEEKKMEEKKPEEKKEGEDKKVDAEKKGEDSDKKPQEGESNKDSKEDS). The segment at 1-74 (MGEEEKKPEA…APAPPPPPQE (74 aa)) is disordered. Over residues 63-73 (PEAPAPPPPPQ) the composition is skewed to pro residues. HMA domains are found at residues 72–136 (PQEV…HRQV) and 170–234 (VVTV…KHAA). A metal cation is bound by residues cysteine 83 and cysteine 86. The segment at 132-157 (THRQVQLLSPIPPPPPPPEKKAEEDK) is disordered. Cysteine 181 and cysteine 184 together coordinate a metal cation. The segment at 235-308 (IMKIDPPPPP…GGGEEEGKVV (74 aa)) is disordered. The span at 254–293 (EGEKKEEEKGEGESKGEEGKDDKAKTDEEKKEGDGGKGEG) shows a compositional bias: basic and acidic residues. The residue at position 352 (cysteine 352) is a Cysteine methyl ester. Cysteine 352 carries the S-farnesyl cysteine lipid modification. A propeptide spans 353-355 (TVM) (removed in mature form).

This sequence belongs to the HIPP family. Efficiently farnesylated in vitro.

Its function is as follows. Heavy-metal-binding protein. Binds zinc, copper and nickel in a reversible manner. The protein is Heavy metal-associated isoprenylated plant protein 7 of Arabidopsis thaliana (Mouse-ear cress).